Consider the following 453-residue polypeptide: 3-phosphoshikimate 1-carboxyvinyltransferase (453 aa).

3-phosphoshikimate contacts are provided by K28, S29, and R33. Position 28 (K28) interacts with phosphoenolpyruvate. Positions 101 and 129 each coordinate phosphoenolpyruvate. The 3-phosphoshikimate site is built by S174, Q176, D326, and K353. Q176 contacts phosphoenolpyruvate. D326 (proton acceptor) is an active-site residue. Residues R357 and R405 each contribute to the phosphoenolpyruvate site.

It belongs to the EPSP synthase family. As to quaternary structure, monomer.

The protein resides in the cytoplasm. It catalyses the reaction 3-phosphoshikimate + phosphoenolpyruvate = 5-O-(1-carboxyvinyl)-3-phosphoshikimate + phosphate. It participates in metabolic intermediate biosynthesis; chorismate biosynthesis; chorismate from D-erythrose 4-phosphate and phosphoenolpyruvate: step 6/7. Catalyzes the transfer of the enolpyruvyl moiety of phosphoenolpyruvate (PEP) to the 5-hydroxyl of shikimate-3-phosphate (S3P) to produce enolpyruvyl shikimate-3-phosphate and inorganic phosphate. In Zymomonas mobilis subsp. mobilis (strain ATCC 31821 / ZM4 / CP4), this protein is 3-phosphoshikimate 1-carboxyvinyltransferase.